The chain runs to 254 residues: Phosphoglycerate mutase 1 (254 aa).

Residues 10 to 17 and 23 to 24 contribute to the substrate site; these read RHGESAWN and SG. The active-site Tele-phosphohistidine intermediate is the H11. A phosphoserine mark is found at S14 and S23. Phosphotyrosine is present on Y26. S31 carries the post-translational modification Phosphoserine. Residues R62, 89-92, and K100 contribute to the substrate site; that span reads ERHY. E89 (proton donor/acceptor) is an active-site residue. K106 is subject to N6-acetyllysine. Residue 116-117 coordinates substrate; it reads RR. S118 carries the phosphoserine modification. 187–188 contributes to the substrate binding site; that stretch reads GN. At K251 the chain carries N6-acetyllysine; alternate. The residue at position 251 (K251) is an N6-succinyllysine; alternate. An N6-acetyllysine mark is found at K253 and K254.

The protein belongs to the phosphoglycerate mutase family. BPG-dependent PGAM subfamily. In terms of assembly, homodimer. In terms of processing, acetylated at Lys-253, Lys-253 and Lys-254 under high glucose condition. Acetylation increases catalytic activity. Under glucose restriction SIRT1 levels dramatically increase and it deacetylates the enzyme. As to expression, expressed in the liver and brain. Not found in the muscle.

It carries out the reaction (2R)-2-phosphoglycerate = (2R)-3-phosphoglycerate. It catalyses the reaction (2R)-3-phospho-glyceroyl phosphate = (2R)-2,3-bisphosphoglycerate + H(+). Catalyzes the interconversion of 2-phosphoglycerate and 3-phosphoglyceratea crucial step in glycolysis, by using 2,3-bisphosphoglycerate. Also catalyzes the interconversion of (2R)-2,3-bisphosphoglycerate and (2R)-3-phospho-glyceroyl phosphate. The chain is Phosphoglycerate mutase 1 from Homo sapiens (Human).